A 341-amino-acid chain; its full sequence is Transcription factor VIP1 (341 aa).

3 disordered regions span residues 1 to 33 (MEGGGRGPNQTILSEIEHMPEAPRQRISHHRRA), 59 to 106 (SLDF…PEAR), and 135 to 156 (SSGEKKKGNHHHSRSNSMDGEM). Residues 1–162 (MEGGGRGPNQ…DGEMSSASFN (162 aa)) are necessary and sufficient for transient T-DNA transformation end expression. A compositionally biased stretch (basic and acidic residues) spans 15-24 (EIEHMPEAPR). The span at 71–80 (QSQQQPQASP) shows a compositional bias: low complexity. Ser-79 is subject to Phosphoserine. An involved in homomultimerization and histone H2A binding region spans residues 163–341 (IESILASVSG…PSYMDFTKRG (179 aa)). Positions 194–257 (DPKRAKRILA…SELNTENKHL (64 aa)) constitute a bZIP domain. Positions 196 to 217 (KRAKRILANRQSAARSKERKIR) are basic motif. The Nuclear localization signal signature appears at 198-205 (AKRILANR). Positions 222 to 257 (LERKVQTLQNEATTLSAQVTMLQRGTSELNTENKHL) are leucine-zipper. Positions 307–331 (SQQSAMNQFGNKTNQQMSTNGQPSL) are enriched in polar residues. The tract at residues 307–341 (SQQSAMNQFGNKTNQQMSTNGQPSLPSYMDFTKRG) is disordered.

This sequence belongs to the bZIP family. As to quaternary structure, forms homomultimers. Interacts with Agrobacterium tumefaciens VirE2 and mediates its translocation to the host nucleus. Binds to VIP2. Forms a complex made of Agrobacterium VirE2, VIP1, VIP2 and single-stranded DNA (ssDNA). The interaction with KAP1 mediates its nuclear import. Binds to the H2A histone RAT5. Interacts with MPK3 and Agrobacterium virF. Forms a complex made of VIP1, VBF and Agrobacterium virE2. Interacts with SCF(VBF) E3 ubiquitin ligase complex. Binds directly to VBF. Forms heterodimers with BZIP34 and BZIP61. Phosphorylated by MPK3. This phosphorylation promotes nuclear localization. As to expression, mostly expressed in dividing cells, present in leaves, roots and seedlings.

The protein localises to the cytoplasm. The protein resides in the nucleus. Functionally, transcription activator that binds specifically to the VIP1 response elements (VREs) DNA sequence 5'-ACNGCT-3' found in some stress genes (e.g. TRX8 and MYB44), when phosphorylated/activated by MPK3. Required for Agrobacterium VirE2 nuclear import and tumorigenicity. Promotes transient expression of T-DNA in early stages by interacting with VirE2 in complex with the T-DNA and facilitating its translocation to the nucleus, and mediates stable genetic transformation by Agrobacterium by binding H2A histone. Prevents cell differentiation and shoot formation. Limits sulfate utilization efficiency (SUE) and sulfate uptake, especially in low-sulfur conditions. Plays a role in osmosensory response by binding to the 5'-AGCTGT/G-3' DNA sequence found in the promoters of the hypoosmolarity-responsive genes CYP707A1 and CYP707A3. Involved in the negative regulation of touch-induced root bending and salt-dependent root bending. The chain is Transcription factor VIP1 from Arabidopsis thaliana (Mouse-ear cress).